We begin with the raw amino-acid sequence, 2116 residues long: Non-structural polyprotein p200 (2116 aa).

The required for efficient proteolysis and P150-P90 interaction stretch occupies residues 36-49 (EVRDVVTAAQKRAI). The Alphavirus-like MT domain maps to 57 to 247 (VFTQMQVSDH…TRPCTTRIYQ (191 aa)). Positions 715–805 (GQLALTSPPP…PATPARADPD (91 aa)) are disordered. 2 stretches are compositionally biased toward pro residues: residues 721–730 (SPPPDNPPPP) and 744–767 (GPPPPAPARDPPPPAPSPPAPPRA). 3 short sequence motifs (pxxPxR; class II SH3-binding) span residues 727-732 (PPPPRR), 747-752 (PPAPAR), and 761-766 (PPAPPR). The 180-residue stretch at 806–985 (SDIVESYARA…LMHASVLVGA (180 aa)) folds into the Macro domain. Positions 990–1028 (RRVSPPPTEPPASRPADDPGRSAQRTAPPPAAPPGDAAA) are disordered. The span at 993–1002 (SPPPTEPPAS) shows a compositional bias: pro residues. In terms of domain architecture, Peptidase C27 spans 1000-1301 (PASRPADDPG…WLAVPLSRGG (302 aa)). Cysteine 1152 (for cysteine protease activity) is an active-site residue. The tract at residues 1152-1183 (CWLRAAANVAQAARACGAYTSAGCPKCAYGRA) is interaction with host CALM1. Cysteine 1175, cysteine 1178, cysteine 1227, and histidine 1273 together coordinate Zn(2+). The interval 1193–1228 (FAALSQRWIASHADASLDGTGDPLDPLMATVGCACS) is EF-hand-like. Histidine 1273 (for cysteine protease activity) is an active-site residue. In terms of domain architecture, (+)RNA virus helicase ATP-binding spans 1320–1468 (EVRRLGDDAM…VPDRWPTERS (149 aa)). Residue 1352–1359 (MAAGAGKT) coordinates a ribonucleoside 5'-triphosphate. Positions 1469 to 1609 (RHTWRFPDCW…ELKEVPAGID (141 aa)) constitute a (+)RNA virus helicase C-terminal domain. The segment at 1700–1900 (YRAGEDGSTL…VELEISAALL (201 aa)) is involved in P150-P90 interaction. The region spanning 1870 to 1981 (TNAIEVDFTE…FLPEGARSAA (112 aa)) is the RdRp catalytic domain. Residues 1902–1906 (LPCAE) carry the Human RB1 binding motif.

In terms of assembly, interacts with RNA-directed RNA polymerase p90. Interacts with host CALM1; this interaction is necessary for the protease activity and viral infectivity. Interacts with host C1QBP. Interacts with the capsid protein. Interacts with human RB1/retinoblastoma protein. Interacts with protease/methyltransferase p150. Zn(2+) is required as a cofactor. In terms of processing, specific enzymatic cleavage by its own cysteine protease yield mature proteins p150 and p90.

The protein localises to the host membrane. The protein resides in the host cytoplasm. It localises to the host perinuclear region. It carries out the reaction RNA(n) + a ribonucleoside 5'-triphosphate = RNA(n+1) + diphosphate. The enzyme catalyses a ribonucleoside 5'-triphosphate + H2O = a ribonucleoside 5'-diphosphate + phosphate + H(+). It catalyses the reaction ATP + H2O = ADP + phosphate + H(+). Its function is as follows. Probable principal replicase for the negative-strand DNA, which replicates the 40S (+) genomic RNA into (-) antigenomic RNA. It cannot replicate the (-) into (+) until cleaved into p150 and p90 mature proteins. Protease that cleaves the precursor polyprotein into two mature products. Together with RNA-directed RNA polymerase p90, replicates the 40S genomic and antigenomic RNA by recognizing replications specific signals. The heterodimer P150/p90 is probably the principal replicase for positive-strand genomic RNA and the 24S subgenomic RNA, which codes for structural proteins. Responsible for the mRNA-capping of the viral mRNAs. This function is necessary since all viral RNAs are synthesized in the cytoplasm, and host capping enzymes are restricted to the nucleus. Forms fibers late in the infection that may be involved in cell-to-cell spread of the virus RNA in the absence of virus particle formation. Functionally, together with protease/methyltransferase p150, replicates the 40S genomic and antigenomic RNA by recognizing replications specific signals. The heterodimer P150/p90 is probably the principal replicase for positive-strand genomic RNA and the 24S subgenomic RNA, which codes for structural proteins. A helicase activity is probably also present. The polypeptide is Non-structural polyprotein p200 (Rubella virus (strain BRDII) (RUBV)).